The primary structure comprises 289 residues: Formamidopyrimidine-DNA glycosylase (289 aa).

The Schiff-base intermediate with DNA role is filled by proline 2. The Proton donor role is filled by glutamate 3. The Proton donor; for beta-elimination activity role is filled by lysine 61. Residues histidine 97, arginine 119, and lysine 168 each coordinate DNA. The segment at 254–288 (NAYGRAGKPCPRCGEPIVRVQWTNRSSHFCPQCQS) adopts an FPG-type zinc-finger fold. Catalysis depends on arginine 278, which acts as the Proton donor; for delta-elimination activity.

This sequence belongs to the FPG family. As to quaternary structure, monomer. It depends on Zn(2+) as a cofactor.

It carries out the reaction Hydrolysis of DNA containing ring-opened 7-methylguanine residues, releasing 2,6-diamino-4-hydroxy-5-(N-methyl)formamidopyrimidine.. The enzyme catalyses 2'-deoxyribonucleotide-(2'-deoxyribose 5'-phosphate)-2'-deoxyribonucleotide-DNA = a 3'-end 2'-deoxyribonucleotide-(2,3-dehydro-2,3-deoxyribose 5'-phosphate)-DNA + a 5'-end 5'-phospho-2'-deoxyribonucleoside-DNA + H(+). Involved in base excision repair of DNA damaged by oxidation or by mutagenic agents. Acts as a DNA glycosylase that recognizes and removes damaged bases. Has a preference for oxidized purines, such as 7,8-dihydro-8-oxoguanine (8-oxoG). Has AP (apurinic/apyrimidinic) lyase activity and introduces nicks in the DNA strand. Cleaves the DNA backbone by beta-delta elimination to generate a single-strand break at the site of the removed base with both 3'- and 5'-phosphates. The protein is Formamidopyrimidine-DNA glycosylase of Corynebacterium urealyticum (strain ATCC 43042 / DSM 7109).